Here is a 58-residue protein sequence, read N- to C-terminus: Sodium/potassium-transporting ATPase subunit gamma (58 aa).

A helical transmembrane segment spans residues Asn-20–Ser-39.

It belongs to the FXYD family. Regulatory subunit of the sodium/potassium-transporting ATPase which is composed of a catalytic alpha subunit, an auxiliary non-catalytic beta subunit and an additional regulatory subunit. Highest levels expressed in the kidney and spleen. Restricted to the basolateral membrane in renal epithelial cells and varies in its level of expression along the nephron.

It is found in the membrane. Its function is as follows. May be involved in forming the receptor site for cardiac glycoside binding or may modulate the transport function of the sodium ATPase. In Bos taurus (Bovine), this protein is Sodium/potassium-transporting ATPase subunit gamma (FXYD2).